Reading from the N-terminus, the 132-residue chain is Small heat shock protein hspL (132 aa).

The sHSP domain maps to 15 to 131; that stretch reads TFTNFVSAPV…VKMSNNNKVE (117 aa).

Belongs to the small heat shock protein (HSP20) family.

This Dictyostelium discoideum (Social amoeba) protein is Small heat shock protein hspL (hspL).